Consider the following 141-residue polypeptide: Nucleoside diphosphate kinase (141 aa).

Lysine 11, phenylalanine 59, arginine 87, threonine 93, arginine 104, and asparagine 114 together coordinate ATP.

The protein belongs to the NDK family. In terms of assembly, homotetramer. The cofactor is Mg(2+).

It localises to the cytoplasm. The enzyme catalyses a 2'-deoxyribonucleoside 5'-diphosphate + ATP = a 2'-deoxyribonucleoside 5'-triphosphate + ADP. It catalyses the reaction a ribonucleoside 5'-diphosphate + ATP = a ribonucleoside 5'-triphosphate + ADP. Major role in the synthesis of nucleoside triphosphates other than ATP. The ATP gamma phosphate is transferred to the NDP beta phosphate via a ping-pong mechanism, using a phosphorylated active-site intermediate. The sequence is that of Nucleoside diphosphate kinase from Saccharophagus degradans (strain 2-40 / ATCC 43961 / DSM 17024).